The sequence spans 775 residues: Mitochondrial intermediate peptidase (775 aa).

Residues 1–28 (MIARPARDVLSSATKKQFRFRGCLAARH) constitute a mitochondrion transit peptide. His-558 contacts Zn(2+). Glu-559 is an active-site residue. His-562 and His-565 together coordinate Zn(2+).

The protein belongs to the peptidase M3 family. Zn(2+) is required as a cofactor.

The protein localises to the mitochondrion matrix. It carries out the reaction Release of an N-terminal octapeptide as second stage of processing of some proteins imported into the mitochondrion.. Its function is as follows. Cleaves proteins, imported into the mitochondrion, to their mature size. While most mitochondrial precursor proteins are processed to the mature form in one step by mitochondrial processing peptidase (MPP), the sequential cleavage by MIP of an octapeptide after initial processing by MPP is a required step for a subgroup of nuclear-encoded precursor proteins destined for the matrix or the inner membrane. The sequence is that of Mitochondrial intermediate peptidase (OCT1) from Schizophyllum commune (Split gill fungus).